We begin with the raw amino-acid sequence, 402 residues long: Putative neuropeptide Y receptor 11 (402 aa).

Topologically, residues 1–45 (MGSVNESCDNYVEIFNKINYFFRDDQVINGTEYSPKEFGYFITFA) are extracellular. 2 N-linked (GlcNAc...) asparagine glycosylation sites follow: Asn-5 and Asn-29. A helical membrane pass occupies residues 46 to 66 (YMLIILFGAIGNFLTIIVVIL). Over 67–85 (NPAMRTTRNFFILNLALSD) the chain is Cytoplasmic. A helical transmembrane segment spans residues 86–106 (FFVCIVTAPTTLYTVLYMFWP). The Extracellular segment spans residues 107–122 (FSRTLCKIAGSLQGFN). A disulfide bridge connects residues Cys-112 and Cys-194. Residues 123–143 (IFLSTFSIASIAVDRYVLIIF) traverse the membrane as a helical segment. The Cytoplasmic segment spans residues 144-152 (PTKRERQQN). Residues 153 to 173 (LSFCFFIMIWVISLILAVPLL) form a helical membrane-spanning segment. Residues 174–210 (QASDLTPVFVEPSCDLALYICHEQNEIWEKMIISKGT) are Extracellular-facing. Residues 211 to 231 (YTLAVLITQYAFPLFSLVFAY) traverse the membrane as a helical segment. Residues 232–272 (SRIAHRMKLRFANRNQNVTTNTNTSQRRRSVVERQRRTHLL) lie on the Cytoplasmic side of the membrane. Residues 273–293 (LVCVVAVFAVAWLPLNVFHIF) form a helical membrane-spanning segment. The Extracellular segment spans residues 294-306 (NTFELVNSFSVTT). A helical membrane pass occupies residues 307-328 (FSICHCLAMCSACLNPLIYAFF). The Cytoplasmic segment spans residues 329-402 (NHNFRIEFMH…LSAMEQDEQL (74 aa)).

It belongs to the G-protein coupled receptor 1 family.

Its subcellular location is the cell membrane. Functionally, could be a receptor for neuropeptide Y and peptide YY. The chain is Putative neuropeptide Y receptor 11 (npr-11) from Caenorhabditis elegans.